We begin with the raw amino-acid sequence, 226 residues long: Cytidylate kinase (226 aa).

10–18 is a binding site for ATP; it reads GPASSGKST.

Belongs to the cytidylate kinase family. Type 1 subfamily.

The protein localises to the cytoplasm. It catalyses the reaction CMP + ATP = CDP + ADP. The catalysed reaction is dCMP + ATP = dCDP + ADP. The protein is Cytidylate kinase of Streptococcus equi subsp. zooepidemicus (strain MGCS10565).